The chain runs to 150 residues: Monothiol glutaredoxin-5, mitochondrial (150 aa).

The transit peptide at 1-29 directs the protein to the mitochondrion; it reads MFLPKFNPIRSFSPILRAKTLLRYQNRMY. The 106-residue stretch at 35 to 140 folds into the Glutaredoxin domain; it reads RKAIEDAIES…DLLEEAQALV (106 aa). Residue lysine 52 coordinates glutathione. Cysteine 60 provides a ligand contact to [2Fe-2S] cluster. Residues 92-96, isoleucine 104, and 117-118 each bind glutathione; these read REGIK and CD.

It belongs to the glutaredoxin family. Monothiol subfamily. As to quaternary structure, homodimer. Interacts with SSQ1. Interacts with BOL1.

It localises to the mitochondrion matrix. In terms of biological role, monothiol glutaredoxin involved in mitochondrial iron-sulfur (Fe/S) cluster transfer. Receives 2Fe/2S clusters from scaffold protein ISU1 and mediates their transfer to apoproteins, to the 4Fe/FS cluster biosynthesis machinery, or export from mitochondrion. In Saccharomyces cerevisiae (strain ATCC 204508 / S288c) (Baker's yeast), this protein is Monothiol glutaredoxin-5, mitochondrial.